The chain runs to 52 residues: Large ribosomal subunit protein eL40 (52 aa).

Residues cysteine 20, cysteine 23, cysteine 34, and cysteine 39 each coordinate Zn(2+).

The protein belongs to the eukaryotic ribosomal protein eL40 family. Component of the large ribosomal subunit. Mature ribosomes consist of a small (40S) and a large (60S) subunit. The 40S subunit contains about 32 different proteins and 1 molecule of RNA (18S). The 60S subunit contains 45 different proteins and 3 molecules of RNA (25S, 5.8S and 5S). Zn(2+) is required as a cofactor.

It is found in the cytoplasm. Functionally, component of the ribosome, a large ribonucleoprotein complex responsible for the synthesis of proteins in the cell. The small ribosomal subunit (SSU) binds messenger RNAs (mRNAs) and translates the encoded message by selecting cognate aminoacyl-transfer RNA (tRNA) molecules. The large subunit (LSU) contains the ribosomal catalytic site termed the peptidyl transferase center (PTC), which catalyzes the formation of peptide bonds, thereby polymerizing the amino acids delivered by tRNAs into a polypeptide chain. The nascent polypeptides leave the ribosome through a tunnel in the LSU and interact with protein factors that function in enzymatic processing, targeting, and the membrane insertion of nascent chains at the exit of the ribosomal tunnel. The sequence is that of Large ribosomal subunit protein eL40 from Candida albicans (strain SC5314 / ATCC MYA-2876) (Yeast).